A 150-amino-acid polypeptide reads, in one-letter code: MKYQQLENLESGWKWKYLVKKHREGELITRYIEASAAQEAVDELLSLENEPVLVNGWIDKHMNPELVNRMKQTIRARRKRHFNAEHQHTRKKSIDLEFIVWQRLAGLAQRRGKTLSETIVQLIEDAENKEKYANKMSSLKQDLQALLGKE.

Belongs to the MatP family. In terms of assembly, homodimer.

It is found in the cytoplasm. Required for spatial organization of the terminus region of the chromosome (Ter macrodomain) during the cell cycle. Prevents early segregation of duplicated Ter macrodomains during cell division. Binds specifically to matS, which is a 13 bp signature motif repeated within the Ter macrodomain. In Escherichia coli O81 (strain ED1a), this protein is Macrodomain Ter protein.